The chain runs to 176 residues: Tumor necrosis factor receptor superfamily member 23 (176 aa).

An N-terminal signal peptide occupies residues 1-29; it reads MVTFSHVSSLSHWFLLLLLLNLFLPVIFA. TNFR-Cys repeat units follow at residues 37–72, 74–114, and 115–155; these read NCPDGEYQSNDVCCKTCPSGTFVKAPCKIPHTQGQC, KCHP…DRKC, and ECQI…NTVC. 9 disulfide bridges follow: Cys-38/Cys-49, Cys-50/Cys-63, Cys-53/Cys-72, Cys-75/Cys-90, Cys-93/Cys-106, Cys-96/Cys-114, Cys-116/Cys-131, Cys-134/Cys-147, and Cys-137/Cys-155. Asn-148 is a glycosylation site (N-linked (GlcNAc...) asparagine). A lipid anchor (GPI-anchor amidated cysteine) is attached at Cys-155. A propeptide spans 156–176 (removed in mature form); that stretch reads SSSVSNPRNWLFLLMLIVFCI.

As to expression, ubiquitous.

Its subcellular location is the cell membrane. Functionally, receptor for the cytotoxic ligand TRAIL. Lacks a cytoplasmic death domain and hence is not capable of inducing apoptosis. May protect cells against TRAIL mediated apoptosis through ligand competition. Cannot induce the NF-kappa-B pathway. The sequence is that of Tumor necrosis factor receptor superfamily member 23 (Tnfrsf23) from Mus musculus (Mouse).